Here is a 488-residue protein sequence, read N- to C-terminus: Germacrene A acid 8-beta-hydroxylase (488 aa).

The helical; Signal-anchor for type II membrane protein transmembrane segment at 2-22 (ELFTIFSIVVSSLILFTFWSL) threads the bilayer. N-linked (GlcNAc...) asparagine glycosylation occurs at Asn-407. Cys-429 contacts heme.

Belongs to the cytochrome P450 family. The cofactor is heme. As to expression, expressed in leaf primordia.

Its subcellular location is the membrane. The enzyme catalyses germacra-1(10),4,11(13)-trien-12-oate + reduced [NADPH--hemoprotein reductase] + O2 = 8beta-hydroxygermacra-1(10),4,11(13)-trien-12-oate + oxidized [NADPH--hemoprotein reductase] + H2O + H(+). Its pathway is secondary metabolite biosynthesis; terpenoid biosynthesis. In terms of biological role, involved in the biosynthesis of germacrene-derived sesquiterpene lactones. Hydroxylates germacrene A acid to 8-beta-hydroxy-germacrene A acid. Unlike 6-alpha-hydroxy-germacrene A acid, this compound cannot undergo spontaneous lactonization. The protein is Germacrene A acid 8-beta-hydroxylase of Helianthus annuus (Common sunflower).